We begin with the raw amino-acid sequence, 518 residues long: Crotonobetaine/carnitine--CoA ligase (518 aa).

Belongs to the ATP-dependent AMP-binding enzyme family.

The enzyme catalyses 4-(trimethylamino)butanoate + ATP + CoA = 4-(trimethylamino)butanoyl-CoA + AMP + diphosphate. It carries out the reaction crotonobetaine + ATP + CoA = crotonobetainyl-CoA + AMP + diphosphate. The catalysed reaction is (R)-carnitine + ATP + CoA = (R)-carnitinyl-CoA + AMP + diphosphate. It participates in amine and polyamine metabolism; carnitine metabolism. Catalyzes the transfer of CoA to carnitine, generating the initial carnitinyl-CoA needed for the CaiB reaction cycle. Also has activity toward crotonobetaine and gamma-butyrobetaine. This chain is Crotonobetaine/carnitine--CoA ligase, found in Proteus sp. (strain LE138).